Reading from the N-terminus, the 427-residue chain is Tumor necrosis factor receptor superfamily member 16 (427 aa).

Positions 1-28 (MGAGATGRAMDGPRLLLLLLLGVSLGGA) are cleaved as a signal peptide. The Extracellular segment spans residues 29 to 250 (KEACPTGLYT…PVVTRGTTDN (222 aa)). TNFR-Cys repeat units follow at residues 31–64 (ACPT…QTVC), 66–107 (PCLD…DAVC), 108–146 (RCAY…NTVC), and 148–188 (ECPD…DAEC). Cystine bridges form between Cys32/Cys43, Cys44/Cys57, Cys47/Cys64, Cys67/Cys83, Cys86/Cys99, Cys89/Cys107, Cys109/Cys122, Cys125/Cys138, Cys128/Cys146, Cys149/Cys164, Cys167/Cys180, and Cys170/Cys188. Residue Asn60 is glycosylated (N-linked (GlcNAc...) asparagine). Residues 194-219 (RWITRSTPPEGSDSTAPSTQEPEAPP) form a disordered region. The segment covering 197 to 214 (TRSTPPEGSDSTAPSTQE) has biased composition (polar residues). The chain crosses the membrane as a helical span at residues 251–272 (LIPVYCSILAAVVVGLVAYIAF). Residues 273–427 (KRWNSCKQNK…CSESTATSPV (155 aa)) are Cytoplasmic-facing. Composition is skewed to polar residues over residues 281–291 (NKQGANSRPVN) and 305–326 (SGIS…TASG). Positions 281-338 (NKQGANSRPVNQTPPPEGEKLHSDSGISVDSQSLHDQQPHTQTASGQALKGDGGLYSS) are disordered. Residue Ser311 is modified to Phosphoserine. The tract at residues 326–341 (GQALKGDGGLYSSLPP) is mediates interaction with KIDINS220. The 78-residue stretch at 344 to 421 (REEVEKLLNG…DLVESLCSES (78 aa)) folds into the Death domain.

As to quaternary structure, homodimer; disulfide-linked. Heterodimer with SORCS2. The extracellular domains of the heterodimer bind NGF. The cytoplasmic region of the heterodimer binds TRIO. NGF binding mediates dissociation of TRIO from the receptor complex. Interacts with RTN4R. Interacts with TRAF2, TRAF4, TRAF6, PTPN13 and RANBP9. Interacts through TRAF6 with SQSTM1 which bridges NGFR to NTRK1. Interacts with BEX1. Interacts with BEX3. Interacts with KIDINS220 and NTRK1. Can form a ternary complex with NTRK1 and KIDINS220 and this complex is affected by the expression levels of KIDINS220. An increase in KIDINS220 expression leads to a decreased association of NGFR and NTRK1. Interacts with NTRK2; may regulate the ligand specificity of the NTRK2 receptor. Interacts (via death domain) with RAB31. Interacts with LINGO1. Interacts with NRADD. Interacts with MAGED1; the interaction antagonizes the association NGFR:NTRK1. Interacts (via death domain) with ARHGDIA and RIPK2. Interacts with BFAR. N- and O-glycosylated. Post-translationally, O-linked glycans consist of Gal(1-3)GalNAc core elongated by 1 or 2 NeuNAc. In terms of processing, phosphorylated on serine residues.

It localises to the cell membrane. The protein resides in the cytoplasm. The protein localises to the perikaryon. It is found in the cell projection. Its subcellular location is the growth cone. It localises to the dendritic spine. Functionally, low affinity receptor which can bind to NGF, BDNF, NTF3, and NTF4. Forms a heterodimeric receptor with SORCS2 that binds the precursor forms of NGF, BDNF and NTF3 with high affinity, and has much lower affinity for mature NGF and BDNF. Plays an important role in differentiation and survival of specific neuronal populations during development. Can mediate cell survival as well as cell death of neural cells. Plays a role in the inactivation of RHOA. Plays a role in the regulation of the translocation of GLUT4 to the cell surface in adipocytes and skeletal muscle cells in response to insulin, probably by regulating RAB31 activity, and thereby contributes to the regulation of insulin-dependent glucose uptake. Necessary for the circadian oscillation of the clock genes BMAL1, PER1, PER2 and NR1D1 in the suprachiasmatic nucleus (SCmgetaN) of the brain and in liver and of the genes involved in glucose and lipid metabolism in the liver. Together with BFAR negatively regulates NF-kappa-B and JNK-related signaling pathways. The chain is Tumor necrosis factor receptor superfamily member 16 (NGFR) from Homo sapiens (Human).